A 450-amino-acid chain; its full sequence is Chromosomal replication initiator protein DnaA (450 aa).

Residues 1-79 (MENIHDLWNR…TGEELLIKFI (79 aa)) are domain I, interacts with DnaA modulators. Residues 79–111 (ITPPNQSEDDFEFQRSSKKHRKPYEESTDFPQS) are domain II. The domain III, AAA+ region stretch occupies residues 112 to 328 (MLNPKYTFDT…GALIRVVAYS (217 aa)). Residues G156, G158, K159, and T160 each coordinate ATP. Positions 329–450 (SLINKEITAD…KEIEEKLKQL (122 aa)) are domain IV, binds dsDNA.

It belongs to the DnaA family. In terms of assembly, oligomerizes as a right-handed, spiral filament on DNA at oriC.

It localises to the cytoplasm. Plays an essential role in the initiation and regulation of chromosomal replication. ATP-DnaA binds to the origin of replication (oriC) to initiate formation of the DNA replication initiation complex once per cell cycle. Binds the DnaA box (a 9 base pair repeat at the origin) and separates the double-stranded (ds)DNA. Forms a right-handed helical filament on oriC DNA; dsDNA binds to the exterior of the filament while single-stranded (ss)DNA is stabiized in the filament's interior. The ATP-DnaA-oriC complex binds and stabilizes one strand of the AT-rich DNA unwinding element (DUE), permitting loading of DNA polymerase. After initiation quickly degrades to an ADP-DnaA complex that is not apt for DNA replication. Binds acidic phospholipids. This Geobacillus sp. (strain WCH70) protein is Chromosomal replication initiator protein DnaA.